Here is a 227-residue protein sequence, read N- to C-terminus: Lysosomal-associated transmembrane protein 4B (227 aa).

4 helical membrane-spanning segments follow: residues 26-46 (ILLGVWYLIINAVVLLILLSA), 72-92 (MCIAIAISLLMILICAMATYG), 100-120 (WIIPFFCYQIFDFALNTLVAI), and 153-173 (CLVLIILLFIGILLTLKGYLI). The tract at residues 205 to 222 (PPYDDATAVPSTAKEPPP) is required for NEDD4 interaction.

This sequence belongs to the LAPTM4/LAPTM5 transporter family. In terms of assembly, homooligomer; upon reaching the lysosomes. Interacts with MCOLN1. Interacts with NEDD4; may play a role in the lysosomal sorting of LAPTM4B; enhances HGS association with NEDD4; mediates inhibition of EGFR degradation. Interacts with PIP5K1C; promotes SNX5 association with LAPTM4B; kinase activity of PIP5K1C is required; interaction is regulated by phosphatidylinositol 4,5-bisphosphate generated by PIP5K1C. Interacts with HGS; promotes HGS ubiquitination. Interacts with SNX5. Interacts with SLC3A2 and SLC7A5; recruits SLC3A2 and SLC7A5 to lysosomes to promote leucine uptake into these organelles and is required for mTORC1 activation. Interacts with LRRC32; decreases TGFB1 production in regulatory T cells. Interacts with BECN1; competes with EGFR for LAPTM4B binding; regulates EGFR activity. Interacts with EGFR; positively correlates with EGFR activation. Undergoes proteolytic cleavage following delivery to the lysosomes. Post-translationally, ubiquitinated by NEDD4.

It is found in the endomembrane system. The protein resides in the late endosome membrane. Its subcellular location is the cell membrane. The protein localises to the cell projection. It localises to the lysosome membrane. It is found in the endosome membrane. The protein resides in the endosome. Its subcellular location is the multivesicular body membrane. The protein localises to the multivesicular body lumen. Required for optimal lysosomal function. Blocks EGF-stimulated EGFR intraluminal sorting and degradation. Conversely by binding with the phosphatidylinositol 4,5-bisphosphate, regulates its PIP5K1C interaction, inhibits HGS ubiquitination and relieves LAPTM4B inhibition of EGFR degradation. Recruits SLC3A2 and SLC7A5 (the Leu transporter) to the lysosome, promoting entry of leucine and other essential amino acid (EAA) into the lysosome, stimulating activation of proton-transporting vacuolar (V)-ATPase protein pump (V-ATPase) and hence mTORC1 activation. Plays a role as negative regulator of TGFB1 production in regulatory T cells. Binds ceramide and facilitates its exit from late endosome in order to control cell death pathways. The polypeptide is Lysosomal-associated transmembrane protein 4B (Mus musculus (Mouse)).